A 470-amino-acid polypeptide reads, in one-letter code: ATP synthase subunit beta (470 aa).

157–164 (GGAGVGKT) serves as a coordination point for ATP.

The protein belongs to the ATPase alpha/beta chains family. F-type ATPases have 2 components, CF(1) - the catalytic core - and CF(0) - the membrane proton channel. CF(1) has five subunits: alpha(3), beta(3), gamma(1), delta(1), epsilon(1). CF(0) has three main subunits: a(1), b(2) and c(9-12). The alpha and beta chains form an alternating ring which encloses part of the gamma chain. CF(1) is attached to CF(0) by a central stalk formed by the gamma and epsilon chains, while a peripheral stalk is formed by the delta and b chains.

The protein localises to the cell inner membrane. It carries out the reaction ATP + H2O + 4 H(+)(in) = ADP + phosphate + 5 H(+)(out). In terms of biological role, produces ATP from ADP in the presence of a proton gradient across the membrane. The catalytic sites are hosted primarily by the beta subunits. In Geobacter metallireducens (strain ATCC 53774 / DSM 7210 / GS-15), this protein is ATP synthase subunit beta.